Consider the following 248-residue polypeptide: 3-deoxy-manno-octulosonate cytidylyltransferase (248 aa).

The protein belongs to the KdsB family.

It is found in the cytoplasm. The catalysed reaction is 3-deoxy-alpha-D-manno-oct-2-ulosonate + CTP = CMP-3-deoxy-beta-D-manno-octulosonate + diphosphate. It participates in nucleotide-sugar biosynthesis; CMP-3-deoxy-D-manno-octulosonate biosynthesis; CMP-3-deoxy-D-manno-octulosonate from 3-deoxy-D-manno-octulosonate and CTP: step 1/1. It functions in the pathway bacterial outer membrane biogenesis; lipopolysaccharide biosynthesis. Functionally, activates KDO (a required 8-carbon sugar) for incorporation into bacterial lipopolysaccharide in Gram-negative bacteria. The chain is 3-deoxy-manno-octulosonate cytidylyltransferase from Klebsiella pneumoniae (strain 342).